An 83-amino-acid polypeptide reads, in one-letter code: Sec-independent protein translocase protein TatA (83 aa).

A helical transmembrane segment spans residues 1–21 (MGSFSIWHWLIVLLIVVMVFG). A disordered region spans residues 44–83 (KDGGQSAAATDDKPAAPAGQVTNAQASDKTTIDVEARQKS). A compositionally biased stretch (polar residues) spans 63 to 72 (QVTNAQASDK). The segment covering 73-83 (TTIDVEARQKS) has biased composition (basic and acidic residues).

It belongs to the TatA/E family. As to quaternary structure, the Tat system comprises two distinct complexes: a TatABC complex, containing multiple copies of TatA, TatB and TatC subunits, and a separate TatA complex, containing only TatA subunits. Substrates initially bind to the TatABC complex, which probably triggers association of the separate TatA complex to form the active translocon.

The protein localises to the cell inner membrane. Part of the twin-arginine translocation (Tat) system that transports large folded proteins containing a characteristic twin-arginine motif in their signal peptide across membranes. TatA could form the protein-conducting channel of the Tat system. This chain is Sec-independent protein translocase protein TatA, found in Polaromonas sp. (strain JS666 / ATCC BAA-500).